Here is a 219-residue protein sequence, read N- to C-terminus: 2-hydroxy-3-keto-5-methylthiopentenyl-1-phosphate phosphatase (219 aa).

This sequence belongs to the HAD-like hydrolase superfamily. MtnX family.

The enzyme catalyses 2-hydroxy-5-methylsulfanyl-3-oxopent-1-enyl phosphate + H2O = 1,2-dihydroxy-5-(methylsulfanyl)pent-1-en-3-one + phosphate. The protein operates within amino-acid biosynthesis; L-methionine biosynthesis via salvage pathway; L-methionine from S-methyl-5-thio-alpha-D-ribose 1-phosphate: step 4/6. In terms of biological role, dephosphorylates 2-hydroxy-3-keto-5-methylthiopentenyl-1-phosphate (HK-MTPenyl-1-P) yielding 1,2-dihydroxy-3-keto-5-methylthiopentene (DHK-MTPene). In Bacillus thuringiensis subsp. konkukian (strain 97-27), this protein is 2-hydroxy-3-keto-5-methylthiopentenyl-1-phosphate phosphatase.